A 250-amino-acid chain; its full sequence is NADH-quinone oxidoreductase subunit B 2 (250 aa).

[4Fe-4S] cluster contacts are provided by Cys41, Cys42, Cys107, and Cys137.

It belongs to the complex I 20 kDa subunit family. NDH-1 is composed of 14 different subunits. Subunits NuoB, C, D, E, F, and G constitute the peripheral sector of the complex. It depends on [4Fe-4S] cluster as a cofactor.

It localises to the cell membrane. It carries out the reaction a quinone + NADH + 5 H(+)(in) = a quinol + NAD(+) + 4 H(+)(out). NDH-1 shuttles electrons from NADH, via FMN and iron-sulfur (Fe-S) centers, to quinones in the respiratory chain. The immediate electron acceptor for the enzyme in this species is believed to be ubiquinone. Couples the redox reaction to proton translocation (for every two electrons transferred, four hydrogen ions are translocated across the cytoplasmic membrane), and thus conserves the redox energy in a proton gradient. The polypeptide is NADH-quinone oxidoreductase subunit B 2 (Herpetosiphon aurantiacus (strain ATCC 23779 / DSM 785 / 114-95)).